Here is a 767-residue protein sequence, read N- to C-terminus: MASANFIRQFELGNDSFSYQKRPEDEPSQPLSNRNINKLNDSSTLKDSSSRIFINSQVLRDGRPVELYAVECSGMKYMELSCGDNVALRRCPDSYFNISQILRLAGTSSSENAKELDDIIESGDYENVDSKHPQIDGVWVPYDRAISIAKRYGVYEILQPLISFNLDLFPKFSKQQQIESSSISKNLNTSSFNTRSPLRNHNFSNPSKSSKNGVHTINNMQSSPSPSSSFLLPLTQIDSQNVKRSNNYLSTSPPILEQRLKRHRIDVSDEDLHPSSQLNDNEASSLFPDTPRLNHSLSFVSLVSSLPPLDQNIMQDYHTSKDILTSIFLDVNFADSSALEAKLSDSLDLDVPIDELGHAALHWAAAVAKMPLLQALIHKGANPLRGNLTGETALMRSVLVTNHLNQNSFGDLLDLLYASLPCTDRAGRTVVHHICLTAGIKGRGSASRYYLETLLNWAKKHASGNNGYMLKDFINYLNHQDKNGDTALNIAARIGNKNIVEVLMQAGASAYIPNRAGLSVANFGIFVENALKQPEDSKQTKVSLMSENLSSKEKTAVPPRQKSRDIIASVTDVISSLDKDFQDEMAAKQSMIDSAYTQLRESTKKLSDLREQLHVSETQRTLFLELRQRCKNLMTSIEEQKSELSNLYESFDPNGIHDSLSLDADAPFTVNENNNKNLSIAELKFQVAAYERNEARLNELANKLWQRNSNIKSKCRRVVSLCTGVDESRVDSLLESLLQAVESDGQQGEVDMGRVAGFLRVVKEHQA.

Positions 17-44 (FSYQKRPEDEPSQPLSNRNINKLNDSST) are disordered. Positions 29–44 (QPLSNRNINKLNDSST) are enriched in polar residues. The 108-residue stretch at 66–173 (ELYAVECSGM…FNLDLFPKFS (108 aa)) folds into the HTH APSES-type domain. Positions 98 to 119 (ISQILRLAGTSSSENAKELDDI) form a DNA-binding region, H-T-H motif. The tract at residues 189-230 (TSSFNTRSPLRNHNFSNPSKSSKNGVHTINNMQSSPSPSSSF) is disordered. A compositionally biased stretch (polar residues) spans 192-221 (FNTRSPLRNHNFSNPSKSSKNGVHTINNMQ). At Ser-252 the chain carries Phosphoserine. The Nuclear localization signal motif lies at 261 to 264 (KRHR). 2 ANK repeats span residues 356-385 (LGHA…NPLR) and 483-512 (NGDT…SAYI). Positions 542 to 562 (VSLMSENLSSKEKTAVPPRQK) are disordered.

As to quaternary structure, DSC1 contains cdc10 and sct1/res1. Interacts with pol5.

It localises to the nucleus. Its function is as follows. Major component of the cell cycle transcription factor complex MBF (MCB binding factor, also known as DSC1), that controls G1-S phase specific gene expression. Involved in the control of rRNA production, via interaction with pol5. May be involved in the transcriptional regulation of the cdc22 and cdt1 genes. In fission yeast, two genes, cdc10 and cdc2, are required for the cell cycle control called start, the point early in the G1 phase at which cells become committed to the mitotic cycle. The protein is Start control protein cdc10 (cdc10) of Schizosaccharomyces pombe (strain 972 / ATCC 24843) (Fission yeast).